We begin with the raw amino-acid sequence, 410 residues long: Monoglucosyldiacylglycerol epimerase (410 aa).

The N-terminal stretch at 1-14 (MAMAWLMGLGLALA) is a signal peptide. The next 2 helical transmembrane spans lie at 71–91 (ALVMLAFGIWPPLLTWMWQGF) and 96–116 (LILAASAGMVYTLGFLLSAIA). Residue Tyr-320 is the Proton acceptor of the active site. The helical transmembrane segment at 380–400 (IIVTINPITFIAFPVKEFFVS) threads the bilayer.

Belongs to the short-chain dehydrogenases/reductases (SDR) family.

The protein localises to the membrane. The enzyme catalyses a 1,2-diacyl-3-O-(beta-D-glucopyranosyl)-sn-glycerol = a 1,2-diacyl-3-O-(beta-D-galactosyl)-sn-glycerol. Functionally, involved in the biosynthesis of galactolipids found in the photosynthetic membranes. Catalyzes the isomerization of monoglucosyldiacylglycerol (GlcDG) to yield monogalactosyldiacylglycerol (MGDG). The polypeptide is Monoglucosyldiacylglycerol epimerase (Synechocystis sp. (strain ATCC 27184 / PCC 6803 / Kazusa)).